A 179-amino-acid polypeptide reads, in one-letter code: Large ribosomal subunit protein uL5 (179 aa).

It belongs to the universal ribosomal protein uL5 family. In terms of assembly, part of the 50S ribosomal subunit; part of the 5S rRNA/L5/L18/L25 subcomplex. Contacts the 5S rRNA and the P site tRNA. Forms a bridge to the 30S subunit in the 70S ribosome.

This is one of the proteins that bind and probably mediate the attachment of the 5S RNA into the large ribosomal subunit, where it forms part of the central protuberance. In the 70S ribosome it contacts protein S13 of the 30S subunit (bridge B1b), connecting the 2 subunits; this bridge is implicated in subunit movement. Contacts the P site tRNA; the 5S rRNA and some of its associated proteins might help stabilize positioning of ribosome-bound tRNAs. The protein is Large ribosomal subunit protein uL5 of Pectobacterium carotovorum subsp. carotovorum (strain PC1).